Here is a 247-residue protein sequence, read N- to C-terminus: SDSLSFSFINFDKDERNVIAQGDARLVGNNILQLTRTDSNGSPVKSTVGRILYVAQVRLWEKSTNRVANFQSQFSFFLESPLSNPADGIAFFIAPPDTAIPSGSAGGLLGLFSPKTAQNESANQVLAVEFDTFYAQNSNTWDPNYPHIGIDVNSIKSAKTVRWERREGVTLNVLVTYNPSTRTIDVVATYPDGQRYDLSVVVDVTTVLPEWVRVGFSAASGEQFQTHNLESWSFTSTLLYTAQKENN.

Asp-87 and Gly-107 together coordinate a carbohydrate. The N-linked (GlcNAc...) asparagine glycan is linked to Asn-119. The Mn(2+) site is built by Glu-129 and Asp-131. The Ca(2+) site is built by Asp-131 and Phe-133. A carbohydrate is bound by residues Ser-138 and Asn-139. Asn-139 and Asp-142 together coordinate Ca(2+). Residues Asp-142 and His-147 each coordinate Mn(2+). The a carbohydrate site is built by Gly-221, Glu-222, and Gln-223.

It belongs to the leguminous lectin family. Homodimer; non-covalently linked. Post-translationally, glycosylated.

Mannose-specific lectin. Also binds alpha-methyl-D-mannoside, D-glucose, N-acetyl-D-glucosamine and sucrose but not D-galactose, D-arabinose, D-fructose, D-xylose, lactose or glycoproteins fetiun, PSM and ovalbumin. Shows agglutinating activity towards rabbit erythrocytes. The sequence is that of Mannose-specific lectin CML-2 from Centrolobium microchaete (Canarywood tree).